The sequence spans 405 residues: Chorismate synthase (405 aa).

The NADP(+) site is built by Arg-43 and Arg-49. FMN is bound by residues Arg-138–Ser-140 and Gln-259–Ala-260. Residues Arg-275–Pro-286 show a composition bias toward basic and acidic residues. Positions Arg-275–Gly-308 are disordered. FMN is bound by residues Gly-303, Lys-318–Thr-322, and Arg-344.

Belongs to the chorismate synthase family. Homotetramer. FMNH2 is required as a cofactor.

The catalysed reaction is 5-O-(1-carboxyvinyl)-3-phosphoshikimate = chorismate + phosphate. Its pathway is metabolic intermediate biosynthesis; chorismate biosynthesis; chorismate from D-erythrose 4-phosphate and phosphoenolpyruvate: step 7/7. Its function is as follows. Catalyzes the anti-1,4-elimination of the C-3 phosphate and the C-6 proR hydrogen from 5-enolpyruvylshikimate-3-phosphate (EPSP) to yield chorismate, which is the branch point compound that serves as the starting substrate for the three terminal pathways of aromatic amino acid biosynthesis. This reaction introduces a second double bond into the aromatic ring system. This is Chorismate synthase from Nocardia farcinica (strain IFM 10152).